The primary structure comprises 725 residues: Catalase B (725 aa).

A signal peptide spans 1–15; sequence MRALSLASLIGIASA. Residues 16–27 constitute a propeptide that is removed on maturation; it reads ACPYMTGELERR. Asparagine 50 carries N-linked (GlcNAc...) asparagine glycosylation. The active site involves histidine 101. N-linked (GlcNAc...) asparagine glycosylation is present at asparagine 119. Asparagine 174 is a catalytic residue. Tyrosine 388 is a binding site for heme. N-linked (GlcNAc...) asparagine glycans are attached at residues asparagine 447, asparagine 550, and asparagine 645.

Belongs to the catalase family. As to quaternary structure, homotetramer. Heme is required as a cofactor.

It localises to the secreted. It catalyses the reaction 2 H2O2 = O2 + 2 H2O. Functionally, occurs in almost all aerobically respiring organisms and serves to protect cells from the toxic effects of hydrogen peroxide through its degradation into water and oxygen. This chain is Catalase B (catB), found in Aspergillus oryzae (strain ATCC 42149 / RIB 40) (Yellow koji mold).